Reading from the N-terminus, the 143-residue chain is Large ribosomal subunit protein uL16 (143 aa).

This sequence belongs to the universal ribosomal protein uL16 family. In terms of assembly, part of the 50S ribosomal subunit.

Its function is as follows. Binds 23S rRNA and is also seen to make contacts with the A and possibly P site tRNAs. This is Large ribosomal subunit protein uL16 from Sphingopyxis alaskensis (strain DSM 13593 / LMG 18877 / RB2256) (Sphingomonas alaskensis).